A 180-amino-acid polypeptide reads, in one-letter code: Crossover junction endodeoxyribonuclease RuvC (180 aa).

Catalysis depends on residues Asp-7, Glu-66, and Asp-138. The Mg(2+) site is built by Asp-7, Glu-66, and Asp-138.

Belongs to the RuvC family. As to quaternary structure, homodimer which binds Holliday junction (HJ) DNA. The HJ becomes 2-fold symmetrical on binding to RuvC with unstacked arms; it has a different conformation from HJ DNA in complex with RuvA. In the full resolvosome a probable DNA-RuvA(4)-RuvB(12)-RuvC(2) complex forms which resolves the HJ. The cofactor is Mg(2+).

Its subcellular location is the cytoplasm. It carries out the reaction Endonucleolytic cleavage at a junction such as a reciprocal single-stranded crossover between two homologous DNA duplexes (Holliday junction).. The RuvA-RuvB-RuvC complex processes Holliday junction (HJ) DNA during genetic recombination and DNA repair. Endonuclease that resolves HJ intermediates. Cleaves cruciform DNA by making single-stranded nicks across the HJ at symmetrical positions within the homologous arms, yielding a 5'-phosphate and a 3'-hydroxyl group; requires a central core of homology in the junction. The consensus cleavage sequence is 5'-(A/T)TT(C/G)-3'. Cleavage occurs on the 3'-side of the TT dinucleotide at the point of strand exchange. HJ branch migration catalyzed by RuvA-RuvB allows RuvC to scan DNA until it finds its consensus sequence, where it cleaves and resolves the cruciform DNA. This chain is Crossover junction endodeoxyribonuclease RuvC, found in Burkholderia orbicola (strain MC0-3).